A 197-amino-acid chain; its full sequence is HTH-type transcriptional regulator BetI (197 aa).

Residues 8 to 68 form the HTH tetR-type domain; the sequence is PIRRQQLIEA…ATMGYIMSML (61 aa). Residues 31 to 50 constitute a DNA-binding region (H-T-H motif); the sequence is SIALIARLAGVSNGIISHYF.

The protein operates within amine and polyamine biosynthesis; betaine biosynthesis via choline pathway [regulation]. Repressor involved in the biosynthesis of the osmoprotectant glycine betaine. It represses transcription of the choline transporter BetT and the genes of BetAB involved in the synthesis of glycine betaine. This chain is HTH-type transcriptional regulator BetI, found in Pseudomonas fluorescens (strain ATCC BAA-477 / NRRL B-23932 / Pf-5).